Here is a 418-residue protein sequence, read N- to C-terminus: uncharacterized protein (418 aa).

Residues Glu-282–Arg-297 show a composition bias toward basic and acidic residues. The segment at Glu-282–Glu-346 is disordered. Residues Ser-304–Asn-316 are compositionally biased toward low complexity. Residues Trp-322–Ser-337 are compositionally biased toward polar residues.

This is an uncharacterized protein from Schizosaccharomyces pombe (strain 972 / ATCC 24843) (Fission yeast).